Consider the following 326-residue polypeptide: Cytosolic Fe-S cluster assembly factor NBP35 (326 aa).

The segment at 1–38 (MTEIANGQQILPPDYTLKEPEPEHCPGPESENAGKGDS) is disordered. The segment covering 16–26 (TLKEPEPEHCP) has biased composition (basic and acidic residues). [4Fe-4S] cluster-binding residues include cysteine 25, cysteine 39, cysteine 42, and cysteine 48. 78-85 (GKGGVGKS) lines the ATP pocket. [4Fe-4S] cluster-binding residues include cysteine 251 and cysteine 254.

This sequence belongs to the Mrp/NBP35 ATP-binding proteins family. NUBP1/NBP35 subfamily. In terms of assembly, heterotetramer of 2 NBP35 and 2 CFD1 chains. It depends on [4Fe-4S] cluster as a cofactor.

It is found in the cytoplasm. Its subcellular location is the nucleus. Component of the cytosolic iron-sulfur (Fe/S) protein assembly (CIA) machinery. Required for maturation of extramitochondrial Fe-S proteins. The NBP35-CFD1 heterotetramer forms a Fe-S scaffold complex, mediating the de novo assembly of an Fe-S cluster and its transfer to target apoproteins. Required for biogenesis and export of both ribosomal subunits, which may reflect a role in assembly of the Fe/S clusters in RLI1, a protein which performs rRNA processing and ribosome export. This chain is Cytosolic Fe-S cluster assembly factor NBP35, found in Kluyveromyces lactis (strain ATCC 8585 / CBS 2359 / DSM 70799 / NBRC 1267 / NRRL Y-1140 / WM37) (Yeast).